The primary structure comprises 189 residues: Tetratricopeptide repeat protein 36 (189 aa).

TPR repeat units lie at residues S51–R84, S86–R118, and R123–F156.

The protein belongs to the TTC36 family.

This is Tetratricopeptide repeat protein 36 (TTC36) from Homo sapiens (Human).